The sequence spans 215 residues: Large ribosomal subunit protein uL3 (215 aa).

An N5-methylglutamine modification is found at Gln-153.

This sequence belongs to the universal ribosomal protein uL3 family. Part of the 50S ribosomal subunit. Forms a cluster with proteins L14 and L19. In terms of processing, methylated by PrmB.

Its function is as follows. One of the primary rRNA binding proteins, it binds directly near the 3'-end of the 23S rRNA, where it nucleates assembly of the 50S subunit. This Nitrosococcus oceani (strain ATCC 19707 / BCRC 17464 / JCM 30415 / NCIMB 11848 / C-107) protein is Large ribosomal subunit protein uL3.